The sequence spans 147 residues: Holdfast attachment protein A (147 aa).

In terms of biological role, involved in attachment of the holdfast to the cell. The holdfast is a structure that allows the bacteria to firmly adheres to surfaces. The polypeptide is Holdfast attachment protein A (hfaA) (Caulobacter vibrioides (strain ATCC 19089 / CIP 103742 / CB 15) (Caulobacter crescentus)).